Here is a 143-residue protein sequence, read N- to C-terminus: Agaricus bisporus lectin (143 aa).

Positions 29, 48, 49, and 73 each coordinate beta-D-Gal-(1-&gt;3)-alpha-D-GalNAc. 3 residues coordinate N-acetyl-beta-D-glucosamine: Thr-82, Arg-103, and Tyr-114.

Belongs to the fungal fruit body lectin family. In terms of assembly, homotetramer.

In terms of biological role, lectin that recognizes O-linked galactose-beta-1,3-N-acetylgalactosamine, a disaccharide (Thomsen-Friedenreich antigen or T-disaccharide), present on cell surface glycoproteins. Can also bind galactose-beta-1,3-N-acetylglucosamine. Does not bind monosaccharides. Can be internalized by clathrin-coated vesicles after binding to surface glycoproteins. After internalization it inhibits nuclear import of nuclear localization signal dependent proteins. Inhibits proliferation of malignant cells without cytotoxicity for normal cells. The chain is Agaricus bisporus lectin from Agaricus bisporus (White button mushroom).